The sequence spans 181 residues: Large ribosomal subunit protein uL5 (181 aa).

The protein belongs to the universal ribosomal protein uL5 family. Part of the 50S ribosomal subunit; part of the 5S rRNA/L5/L18/L25 subcomplex. Contacts the 5S rRNA and the P site tRNA. Forms a bridge to the 30S subunit in the 70S ribosome.

Its function is as follows. This is one of the proteins that bind and probably mediate the attachment of the 5S RNA into the large ribosomal subunit, where it forms part of the central protuberance. In the 70S ribosome it contacts protein S13 of the 30S subunit (bridge B1b), connecting the 2 subunits; this bridge is implicated in subunit movement. Contacts the P site tRNA; the 5S rRNA and some of its associated proteins might help stabilize positioning of ribosome-bound tRNAs. This Campylobacter jejuni subsp. doylei (strain ATCC BAA-1458 / RM4099 / 269.97) protein is Large ribosomal subunit protein uL5.